Here is a 182-residue protein sequence, read N- to C-terminus: UPF0316 protein Sde_0566 (182 aa).

3 consecutive transmembrane segments (helical) span residues 7-27 (VAPE…VSLG), 41-61 (LAAF…GQVF), and 67-87 (WYLA…GMWI).

The protein belongs to the UPF0316 family.

Its subcellular location is the cell membrane. This chain is UPF0316 protein Sde_0566, found in Saccharophagus degradans (strain 2-40 / ATCC 43961 / DSM 17024).